Consider the following 394-residue polypeptide: Maltose permease (394 aa).

Topologically, residues 1–11 are cytoplasmic; the sequence is MGAAFKWGAAA. Residues 12–38 traverse the membrane as a helical segment; that stretch reads RKTVFPLFYFLIFFAFGALFPLLSVYL. The Extracellular portion of the chain corresponds to 39-45; sequence QEEARLS. The chain crosses the membrane as a helical span at residues 46-74; sequence GAAIGWIMSLPPIVTMAAQPLWGTAADYT. The Cytoplasmic portion of the chain corresponds to 75–78; sequence RKPV. Residues 79 to 104 traverse the membrane as a helical segment; that stretch reads GLLLAALVLAALFGVMYALAGSYRLF. The Extracellular segment spans residues 105 to 108; it reads VVLT. Residues 109-126 form a helical membrane-spanning segment; the sequence is VLLSAMQSAIVPLSDSLA. Topologically, residues 127–137 are cytoplasmic; sequence LRHVHEQGGNY. A helical transmembrane segment spans residues 138 to 160; it reads GAIRLWGSLGFAMAVLAVGWLSD. Residues 161–163 are Extracellular-facing; that stretch reads HIA. A helical transmembrane segment spans residues 164 to 183; sequence FAVIFYAFSLALLTAAALAT. At 184–213 the chain is on the cytoplasmic side; that stretch reads RLPRYPMGAPGALTRQDVRGLLASRPFRLL. A helical transmembrane segment spans residues 214-233; it reads LVATFLLFGPILANNSYFGL. The Extracellular segment spans residues 234–237; it reads LIHE. The chain crosses the membrane as a helical span at residues 238–262; the sequence is LGGTLTGIGLAFLFAAGSEAPFMKA. Residues 263-272 are Cytoplasmic-facing; it reads ADRLIGRFGM. Residues 273–292 form a helical membrane-spanning segment; that stretch reads VRLLLLAALISAARWLAYAA. The Extracellular segment spans residues 293–295; sequence DPP. Residues 296–318 form a helical membrane-spanning segment; sequence LWFVYMTTVVQGCSVGLAIPTAL. At 319 to 330 the chain is on the cytoplasmic side; that stretch reads QYARRLAPERVQ. Residues 331–358 traverse the membrane as a helical segment; sequence STAVALYSAVGNGLGAWFCTLVGGYLLE. Residues 359 to 361 are Extracellular-facing; that stretch reads RWQ. The helical transmembrane segment at 362–382 threads the bilayer; that stretch reads IGAVYLFFSICTIVGVLVLLL. The Cytoplasmic segment spans residues 383–394; that stretch reads LAKRERTAGEEK.

The protein belongs to the major facilitator superfamily.

It localises to the cell membrane. Its function is as follows. High affinity transport of maltose. In Geobacillus stearothermophilus (Bacillus stearothermophilus), this protein is Maltose permease (malA).